Consider the following 245-residue polypeptide: NAD(P)H-quinone oxidoreductase subunit K (245 aa).

4 residues coordinate [4Fe-4S] cluster: Cys-58, Cys-59, Cys-123, and Cys-154. The disordered stretch occupies residues 210–245; sequence SDTRSAPPKELAEAIGMPIPPALLTEKAQKEEQTRG. Positions 236-245 are enriched in basic and acidic residues; it reads KAQKEEQTRG.

It belongs to the complex I 20 kDa subunit family. NDH-1 can be composed of about 15 different subunits; different subcomplexes with different compositions have been identified which probably have different functions. [4Fe-4S] cluster serves as cofactor.

Its subcellular location is the cellular thylakoid membrane. It catalyses the reaction a plastoquinone + NADH + (n+1) H(+)(in) = a plastoquinol + NAD(+) + n H(+)(out). The catalysed reaction is a plastoquinone + NADPH + (n+1) H(+)(in) = a plastoquinol + NADP(+) + n H(+)(out). NDH-1 shuttles electrons from an unknown electron donor, via FMN and iron-sulfur (Fe-S) centers, to quinones in the respiratory and/or the photosynthetic chain. The immediate electron acceptor for the enzyme in this species is believed to be plastoquinone. Couples the redox reaction to proton translocation, and thus conserves the redox energy in a proton gradient. Cyanobacterial NDH-1 also plays a role in inorganic carbon-concentration. The chain is NAD(P)H-quinone oxidoreductase subunit K from Nostoc punctiforme (strain ATCC 29133 / PCC 73102).